The following is a 132-amino-acid chain: MENIINYIKWGIVSLGTLFTWIFGAWDIPLITLLVFIFLDYLTGVIKGCKSKELCSNIGLRGITKKGLILVVLLVAVMLDRLLDNGTWMFRTLIAYFYIMNEGISILENCAALGVPIPEKLKQALKQLNNKK.

3 helical membrane-spanning segments follow: residues phenylalanine 19 to leucine 39, isoleucine 58 to methionine 78, and leucine 93 to leucine 113.

This sequence belongs to the bacteriophage holin family. Cp-1 holin subfamily.

It localises to the cell membrane. This is an uncharacterized protein from Clostridium perfringens.